The sequence spans 480 residues: Cysteine--tRNA ligase (480 aa).

Cys-29 contributes to the Zn(2+) binding site. The short motif at 31–41 is the 'HIGH' region element; the sequence is PTVYSDPHLGH. The Zn(2+) site is built by Cys-220, His-245, and Glu-249. The 'KMSKS' region signature appears at 276–280; that stretch reads KMAKS. Lys-279 serves as a coordination point for ATP.

This sequence belongs to the class-I aminoacyl-tRNA synthetase family. As to quaternary structure, monomer. Zn(2+) serves as cofactor.

Its subcellular location is the cytoplasm. It catalyses the reaction tRNA(Cys) + L-cysteine + ATP = L-cysteinyl-tRNA(Cys) + AMP + diphosphate. This chain is Cysteine--tRNA ligase, found in Thermus thermophilus (strain ATCC BAA-163 / DSM 7039 / HB27).